Consider the following 546-residue polypeptide: CTP synthase (546 aa).

The amidoligase domain stretch occupies residues 1-266; that stretch reads MTTRYIFVTG…DQLVTKRFGI (266 aa). CTP is bound at residue Ser14. UTP is bound at residue Ser14. Residues 15–20 and Asp72 each bind ATP; that span reads SLGKGI. 2 residues coordinate Mg(2+): Asp72 and Glu140. CTP-binding positions include 147 to 149, 187 to 192, and Lys223; these read DIE and KTKPTQ. UTP is bound by residues 187–192 and Lys223; that span reads KTKPTQ. Residue 239–241 coordinates ATP; the sequence is KDV. The 252-residue stretch at 291–542 folds into the Glutamine amidotransferase type-1 domain; it reads TIGMVGKYIE…VAAAYTYQKR (252 aa). Gly352 serves as a coordination point for L-glutamine. Cys379 functions as the Nucleophile; for glutamine hydrolysis in the catalytic mechanism. L-glutamine-binding positions include 380 to 383, Glu403, and Arg470; that span reads LGMQ. Active-site residues include His515 and Glu517.

This sequence belongs to the CTP synthase family. In terms of assembly, homotetramer.

It catalyses the reaction UTP + L-glutamine + ATP + H2O = CTP + L-glutamate + ADP + phosphate + 2 H(+). It carries out the reaction L-glutamine + H2O = L-glutamate + NH4(+). The catalysed reaction is UTP + NH4(+) + ATP = CTP + ADP + phosphate + 2 H(+). It participates in pyrimidine metabolism; CTP biosynthesis via de novo pathway; CTP from UDP: step 2/2. With respect to regulation, allosterically activated by GTP, when glutamine is the substrate; GTP has no effect on the reaction when ammonia is the substrate. The allosteric effector GTP functions by stabilizing the protein conformation that binds the tetrahedral intermediate(s) formed during glutamine hydrolysis. Inhibited by the product CTP, via allosteric rather than competitive inhibition. Catalyzes the ATP-dependent amination of UTP to CTP with either L-glutamine or ammonia as the source of nitrogen. Regulates intracellular CTP levels through interactions with the four ribonucleotide triphosphates. The polypeptide is CTP synthase (Shewanella halifaxensis (strain HAW-EB4)).